A 200-amino-acid chain; its full sequence is Ribonuclease HII (200 aa).

One can recognise an RNase H type-2 domain in the interval 9–198 (ALIAGVDEVG…VQRVLAQAKG (190 aa)). Positions 15, 16, and 107 each coordinate a divalent metal cation.

It belongs to the RNase HII family. Mn(2+) serves as cofactor. Requires Mg(2+) as cofactor.

It is found in the cytoplasm. The catalysed reaction is Endonucleolytic cleavage to 5'-phosphomonoester.. Functionally, endonuclease that specifically degrades the RNA of RNA-DNA hybrids. This chain is Ribonuclease HII, found in Pseudoalteromonas translucida (strain TAC 125).